The sequence spans 139 residues: MAFSPKRVKHRKVQRGRIKGEATRCNNIDFGDYALVSLEPFLLTNRQIEAARVALNRKIKRGGKLWIRVFPDKPYSKKPAEVRMGGGKGAPEYWVAVVKPGTIIFELAGVDKNLAEQAMTLAGSKLPFKTRFAEQIQAD.

It belongs to the universal ribosomal protein uL16 family. Part of the 50S ribosomal subunit.

In terms of biological role, binds 23S rRNA and is also seen to make contacts with the A and possibly P site tRNAs. The sequence is that of Large ribosomal subunit protein uL16 from Treponema denticola (strain ATCC 35405 / DSM 14222 / CIP 103919 / JCM 8153 / KCTC 15104).